We begin with the raw amino-acid sequence, 245 residues long: Carbohydrate deacetylase (245 aa).

Residues His59 and His125 each contribute to the Mg(2+) site.

It belongs to the YdjC deacetylase family. As to quaternary structure, homodimer. Mg(2+) is required as a cofactor.

Probably catalyzes the deacetylation of acetylated carbohydrates an important step in the degradation of oligosaccharides. This chain is Carbohydrate deacetylase, found in Listeria monocytogenes serotype 4b (strain CLIP80459).